We begin with the raw amino-acid sequence, 507 residues long: ATP synthase subunit alpha, chloroplastic (507 aa).

An ATP-binding site is contributed by Gly-170 to Thr-177.

The protein belongs to the ATPase alpha/beta chains family. In terms of assembly, F-type ATPases have 2 components, CF(1) - the catalytic core - and CF(0) - the membrane proton channel. CF(1) has five subunits: alpha(3), beta(3), gamma(1), delta(1), epsilon(1). CF(0) has four main subunits: a, b, b' and c.

The protein resides in the plastid. The protein localises to the chloroplast thylakoid membrane. The catalysed reaction is ATP + H2O + 4 H(+)(in) = ADP + phosphate + 5 H(+)(out). In terms of biological role, produces ATP from ADP in the presence of a proton gradient across the membrane. The alpha chain is a regulatory subunit. This is ATP synthase subunit alpha, chloroplastic from Manihot esculenta (Cassava).